Here is a 381-residue protein sequence, read N- to C-terminus: Flap endonuclease 1 (381 aa).

Residues 1 to 105 (MGVKGLNQLI…GELEKRLLKR (105 aa)) form an N-domain region. Asp34 contacts Mg(2+). The DNA site is built by Arg47 and Arg71. Positions 87, 159, 161, 180, and 182 each coordinate Mg(2+). The I-domain stretch occupies residues 123 to 254 (EVMKFEKRLV…VTAYKLIKEH (132 aa)). Glu159 is a binding site for DNA. Residues Gly232 and Asp234 each coordinate DNA. Mg(2+) is bound at residue Asp234. Residues 340 to 348 (VQGRLDGFF) form an interaction with PCNA region. Residues 354 to 381 (PGAKAGDKKGDKKRGSDSKASNNKKKRK) form a disordered region. The segment covering 358 to 370 (AGDKKGDKKRGSD) has biased composition (basic and acidic residues).

Belongs to the XPG/RAD2 endonuclease family. FEN1 subfamily. Interacts with PCNA. Three molecules of FEN1 bind to one PCNA trimer with each molecule binding to one PCNA monomer. PCNA stimulates the nuclease activity without altering cleavage specificity. It depends on Mg(2+) as a cofactor. Post-translationally, phosphorylated. Phosphorylation upon DNA damage induces relocalization to the nuclear plasma.

Its subcellular location is the nucleus. It localises to the nucleolus. It is found in the nucleoplasm. The protein resides in the mitochondrion. Functionally, structure-specific nuclease with 5'-flap endonuclease and 5'-3' exonuclease activities involved in DNA replication and repair. During DNA replication, cleaves the 5'-overhanging flap structure that is generated by displacement synthesis when DNA polymerase encounters the 5'-end of a downstream Okazaki fragment. It enters the flap from the 5'-end and then tracks to cleave the flap base, leaving a nick for ligation. Also involved in the long patch base excision repair (LP-BER) pathway, by cleaving within the apurinic/apyrimidinic (AP) site-terminated flap. Acts as a genome stabilization factor that prevents flaps from equilibrating into structures that lead to duplications and deletions. Also possesses 5'-3' exonuclease activity on nicked or gapped double-stranded DNA, and exhibits RNase H activity. Also involved in replication and repair of rDNA and in repairing mitochondrial DNA. This is Flap endonuclease 1 from Scheffersomyces stipitis (strain ATCC 58785 / CBS 6054 / NBRC 10063 / NRRL Y-11545) (Yeast).